The sequence spans 476 residues: Major facilitator superfamily domain-containing protein 12 (476 aa).

Position 1 is an N-acetylmethionine (methionine 1). The Cytoplasmic segment spans residues 1 to 25 (MSPPSDDAGPGPPRTLSLAARLSFA). A helical transmembrane segment spans residues 26-46 (VGHFLNDLCAGMWFTYLLLFL). The Lumenal portion of the chain corresponds to 47-55 (HSVRGYSSR). Residues 56-76 (GAGLLLLLGQVADGLCTPLVG) form a helical membrane-spanning segment. Residues 77–94 (YEADRASCVRCGPRKAWH) are Cytoplasmic-facing. Residues 95 to 115 (LAGTVCVLLSFPFIFSPCLGC) traverse the membrane as a helical segment. Over 116–121 (GEATPE) the chain is Lumenal. Residues 122–142 (WAALLYYGPFIVVFQFGWAAT) form a helical membrane-spanning segment. Topologically, residues 143 to 167 (QIAHLSLIPELVTSDHEKVELTALR) are cytoplasmic. A helical transmembrane segment spans residues 168–188 (YAFTVVANITVYGAAWLLLHL). Residues 189-213 (QGSAHGEQDISVGDQLGVQDVPVFR) lie on the Lumenal side of the membrane. Residues 214–234 (NLALLVVGVGAIFSLLFHLGT) traverse the membrane as a helical segment. Residues 235–284 (KEGHRSQHWGNEPNEHTPLVAPAAQPLLLWKHWLREPAFYQVGMLYMTTR) are Cytoplasmic-facing. Phosphothreonine is present on threonine 251. Residues 285–305 (LIVNLSQTYIAMYLTYSLSLP) traverse the membrane as a helical segment. Residue lysine 306 is a topological domain, lumenal. A helical membrane pass occupies residues 307–327 (KFIATIPLVMYLSGFFSSFLM). Residues 328-343 (KPVNRRIGRNMTYFTG) lie on the Cytoplasmic side of the membrane. Helical transmembrane passes span 344–364 (LLVI…GVAV) and 365–385 (YGAA…SLAM). The Cytoplasmic portion of the chain corresponds to 386–398 (TADLIGPHTHSGA). A helical transmembrane segment spans residues 399 to 419 (FVYGAMSFSDKVANGLAVMAV). At 420–444 (QSLHPCPSELCCGACISFYHWVMTA) the chain is on the lumenal side. A helical membrane pass occupies residues 445 to 465 (VTGGVGVAAALALCSLLIWPI). Over 466–476 (RIRNRDPRDRP) the chain is Cytoplasmic.

This sequence belongs to the major facilitator superfamily. Post-translationally, phosphorylation at Thr-251 by MTOR via mTORC1 pathway promotes cysteine transport in lysosomes, thereby regulating lysosomal cysteine and cystine storage and redox homeostasis.

Its subcellular location is the melanosome membrane. The protein localises to the lysosome membrane. The enzyme catalyses L-cysteine(in) = L-cysteine(out). Its function is as follows. Transporter that mediates the import of cysteine into melanosomes, thereby regulating skin/hair pigmentation. In melanosomes, cysteine import is required both for normal levels of cystine, the oxidized dimer of cysteine, and provide cysteine for the production of the cysteinyldopas used in pheomelanin synthesis, thereby regulating skin/hair pigmentation. Also catalyzes import of cysteine into lysosomes in non-pigmented cells, regulating lysosomal cystine and cysteine storage, which is essnetial for redox homeostasis. This is Major facilitator superfamily domain-containing protein 12 from Mus musculus (Mouse).